Here is a 387-residue protein sequence, read N- to C-terminus: Patatin-03 (387 aa).

A signal peptide spans 1–23; the sequence is MATTKSVLVLIFMILATTSSTFA. Positions 32 to 230 constitute a PNPLA domain; that stretch reads LSIDGGGIKG…TVADPALLSV (199 aa). The GXGXXG signature appears at 36–41; it reads GGGIKG. The GXSXG motif lies at 75–79; it reads GTSTG. The Nucleophile role is filled by Ser-77. Asn-115 and Asn-203 each carry an N-linked (GlcNAc...) asparagine glycan. Residue Asp-216 is the Proton acceptor of the active site. A DGA/G motif is present at residues 216–218; the sequence is DGA.

It belongs to the patatin family. As to expression, tuber.

It is found in the vacuole. Its function is as follows. Probable lipolytic acyl hydrolase (LAH), an activity which is thought to be involved in the response of tubers to pathogens. In Solanum tuberosum (Potato), this protein is Patatin-03.